The chain runs to 455 residues: Keratin, type I cuticular Ha5 (455 aa).

The interval 1-97 (MASKCLKAGF…FGEGILTGNE (97 aa)) is head. The IF rod domain occupies 97 to 408 (EKETMQSLND…GLLESEDSKL (312 aa)). The interval 98–132 (KETMQSLNDRLAGYLEKVRQLEQENASLESRIREW) is coil 1A. A linker 1 region spans residues 133–143 (CEQQVPYMCPD). Residues 144-244 (YQSYFRTIEE…HEEEVNSLRC (101 aa)) are coil 1B. The linker 12 stretch occupies residues 245-260 (QLGDRLNVEVDAAPPV). Residues 261-404 (DLNRVLEEMR…NTYRGLLESE (144 aa)) are coil 2. A tail region spans residues 405-455 (DSKLPCNPCAPDYSPSKSCLPCLPAASCGPSAARTNCSPRPICVPCPGGRF).

The protein belongs to the intermediate filament family. As to expression, early expression in the hair follicle, mainly found in supramatricial cells and lowermost cortical cells of the hair bulb.

This Homo sapiens (Human) protein is Keratin, type I cuticular Ha5 (KRT35).